The following is a 78-amino-acid chain: uncharacterized protein (78 aa).

2 helical membrane-spanning segments follow: residues 13–35 and 50–72; these read AGVG…PTGI and GTTF…FYYF.

The protein resides in the cell membrane. This is an uncharacterized protein from Pasteurella multocida (strain Pm70).